The primary structure comprises 347 residues: Holliday junction branch migration complex subunit RuvB (347 aa).

The interval 1 to 183 (MTDVPRMVTP…FGIPVRLNFY (183 aa)) is large ATPase domain (RuvB-L). Residues Leu22, Arg23, Gly64, Lys67, Thr68, Thr69, 130 to 132 (EDF), Arg173, Tyr183, and Arg220 each bind ATP. Thr68 lines the Mg(2+) pocket. Residues 184–254 (TVDELEKIVS…IADHALGALE (71 aa)) are small ATPAse domain (RuvB-S). The tract at residues 257–347 (AAGLDAMDRR…QFGLFGGEDE (91 aa)) is head domain (RuvB-H). Residues Arg293, Arg312, and Arg317 each coordinate DNA.

The protein belongs to the RuvB family. Homohexamer. Forms an RuvA(8)-RuvB(12)-Holliday junction (HJ) complex. HJ DNA is sandwiched between 2 RuvA tetramers; dsDNA enters through RuvA and exits via RuvB. An RuvB hexamer assembles on each DNA strand where it exits the tetramer. Each RuvB hexamer is contacted by two RuvA subunits (via domain III) on 2 adjacent RuvB subunits; this complex drives branch migration. In the full resolvosome a probable DNA-RuvA(4)-RuvB(12)-RuvC(2) complex forms which resolves the HJ.

Its subcellular location is the cytoplasm. The catalysed reaction is ATP + H2O = ADP + phosphate + H(+). The RuvA-RuvB-RuvC complex processes Holliday junction (HJ) DNA during genetic recombination and DNA repair, while the RuvA-RuvB complex plays an important role in the rescue of blocked DNA replication forks via replication fork reversal (RFR). RuvA specifically binds to HJ cruciform DNA, conferring on it an open structure. The RuvB hexamer acts as an ATP-dependent pump, pulling dsDNA into and through the RuvAB complex. RuvB forms 2 homohexamers on either side of HJ DNA bound by 1 or 2 RuvA tetramers; 4 subunits per hexamer contact DNA at a time. Coordinated motions by a converter formed by DNA-disengaged RuvB subunits stimulates ATP hydrolysis and nucleotide exchange. Immobilization of the converter enables RuvB to convert the ATP-contained energy into a lever motion, pulling 2 nucleotides of DNA out of the RuvA tetramer per ATP hydrolyzed, thus driving DNA branch migration. The RuvB motors rotate together with the DNA substrate, which together with the progressing nucleotide cycle form the mechanistic basis for DNA recombination by continuous HJ branch migration. Branch migration allows RuvC to scan DNA until it finds its consensus sequence, where it cleaves and resolves cruciform DNA. In Nitrobacter hamburgensis (strain DSM 10229 / NCIMB 13809 / X14), this protein is Holliday junction branch migration complex subunit RuvB.